A 233-amino-acid polypeptide reads, in one-letter code: Small ribosomal subunit protein uS7m (233 aa).

A mitochondrion-targeting transit peptide spans 1 to 28 (MAAPTAAGLCPRLRAWLPRLTQVRWSRY).

This sequence belongs to the universal ribosomal protein uS7 family. Component of the mitochondrial ribosome small subunit (28S) which comprises a 12S rRNA and about 30 distinct proteins.

It localises to the mitochondrion. In Gallus gallus (Chicken), this protein is Small ribosomal subunit protein uS7m (MRPS7).